A 162-amino-acid chain; its full sequence is Caveolin-2 (162 aa).

Residues 1-86 (MGLETEKADV…FEMSKYVIYK (86 aa)) lie on the Cytoplasmic side of the membrane. Y19 carries the phosphotyrosine; by SRC modification. Residues S20 and S23 each carry the phosphoserine modification. Phosphotyrosine; by SRC is present on Y27. An intramembrane region (helical) is located at residues 87–107 (FLTVFLAIPLAFAAGILFATL). Over 108 to 162 (SCLHIWIIMPFVKTCLMVLPSVQTIWKSVTDVVIAPLCTSIGRSFSSVSLQLSHD) the chain is Cytoplasmic.

It belongs to the caveolin family. As to quaternary structure, monomer or homodimer. Interacts with CAV1; the interaction forms a stable heterooligomeric complex that is required for targeting to lipid rafts and for caveolae formation. Tyrosine phosphorylated forms do not form heterooligomers with the Tyr-19-phosphorylated form existing as a monomer or dimer, and the Tyr-27-form as a monomer only. Interacts (tyrosine phosphorylated form) with the SH2 domain-containing proteins, RASA1, NCK1 and SRC. Interacts (tyrosine phosphorylated form) with INSR, the interaction (Tyr-27-phosphorylated form) is increased on insulin stimulation. Interacts (Tyr-19 phosphorylated form) with MAPK1 (phosphorylated form); the interaction, promoted by insulin, leads to nuclear location and MAPK1 activation. Interacts with STAT3; the interaction is increased on insulin-induced tyrosine phosphorylation leading to STAT activation. In terms of processing, phosphorylated on serine and tyrosine residues. CAV1 promotes phosphorylation on Ser-23 which then targets the complex to the plasma membrane, lipid rafts and caveolae. Phosphorylation on both Tyr-19 and Tyr-27 is required for insulin-induced 'Ser-727' phosphorylation of STAT3 and its activation. Phosphorylation on Tyr-19 is required for insulin-induced phosphorylation of MAPK1 and DNA binding of STAT3. Tyrosine phosphorylation is induced by both EGF and insulin. In terms of tissue distribution, expressed in aortic endothelial cells.

It localises to the nucleus. The protein resides in the cytoplasm. Its subcellular location is the golgi apparatus membrane. The protein localises to the cell membrane. It is found in the membrane. It localises to the caveola. Its function is as follows. May act as a scaffolding protein within caveolar membranes. Interacts directly with G-protein alpha subunits and can functionally regulate their activity. Acts as an accessory protein in conjunction with CAV1 in targeting to lipid rafts and driving caveolae formation. Positive regulator of cellular mitogenesis of the MAPK signaling pathway. Required for the insulin-stimulated nuclear translocation and activation of MAPK1 and STAT3, and the subsequent regulation of cell cycle progression. In Bos taurus (Bovine), this protein is Caveolin-2 (CAV2).